Here is a 133-residue protein sequence, read N- to C-terminus: Small ribosomal subunit protein uS8 (133 aa).

Belongs to the universal ribosomal protein uS8 family. In terms of assembly, part of the 30S ribosomal subunit. Contacts proteins S5 and S12.

Functionally, one of the primary rRNA binding proteins, it binds directly to 16S rRNA central domain where it helps coordinate assembly of the platform of the 30S subunit. The protein is Small ribosomal subunit protein uS8 of Micrococcus luteus (Micrococcus lysodeikticus).